A 353-amino-acid chain; its full sequence is Rhodopsin (353 aa).

The Extracellular portion of the chain corresponds to 1–36 (MNGTEGPYFYIPMVNTTGIVRSPYEYPQYYLVNPAA). Residues N2 and N15 are each glycosylated (N-linked (GlcNAc...) asparagine). Residues 37–61 (YAALGAYMFLLILVGFPVNFLTLYV) form a helical membrane-spanning segment. Residues 62 to 73 (TLEHKKLRTPLN) lie on the Cytoplasmic side of the membrane. Residues 74–96 (YILLNLAVADLFMVLGGFTTTMY) traverse the membrane as a helical segment. The Extracellular segment spans residues 97 to 110 (TSMHGYFVLGRLGC). Cysteines 110 and 187 form a disulfide. A helical membrane pass occupies residues 111-133 (NVEGFFATLGGEIALWSLVVLAI). A 'Ionic lock' involved in activated form stabilization motif is present at residues 134-136 (ERW). Over 134–152 (ERWVVVCKPISNFRFSEDH) the chain is Cytoplasmic. Residues 153-173 (AIMGLAFTWVMASACAVPPLV) traverse the membrane as a helical segment. At 174–202 (GWSRYIPEGMQCSCGIDYYTRAEGFNNES) the chain is on the extracellular side. N200 carries N-linked (GlcNAc...) asparagine glycosylation. Residues 203-224 (FVIYMFVCHFLIPLVVVFFCYG) form a helical membrane-spanning segment. The Cytoplasmic portion of the chain corresponds to 225-252 (RLLCAVKEAAAAQQESETTQRAEREVSR). A helical membrane pass occupies residues 253–274 (MVVIMVVAFLVCWCPYAGVAWY). Residues 275-286 (IFTHQGSEFGPL) lie on the Extracellular side of the membrane. A helical transmembrane segment spans residues 287–308 (FMTFPAFFAKSSSIYNPMIYIC). An N6-(retinylidene)lysine modification is found at K296. Over 309-353 (MNKQFRHCMITTLCCGKNPFEEEEGASTTSKTEASSVSSSSVSPA) the chain is Cytoplasmic. Residues C322 and C323 are each lipidated (S-palmitoyl cysteine). Residues 330 to 353 (EEEGASTTSKTEASSVSSSSVSPA) are disordered. Over residues 334 to 353 (ASTTSKTEASSVSSSSVSPA) the composition is skewed to low complexity.

Belongs to the G-protein coupled receptor 1 family. Opsin subfamily. Phosphorylated on some or all of the serine and threonine residues present in the C-terminal region. In terms of processing, contains one covalently linked retinal chromophore.

The protein localises to the membrane. Its subcellular location is the cell projection. It localises to the cilium. The protein resides in the photoreceptor outer segment. Functionally, photoreceptor required for image-forming vision at low light intensity. While most salt water fish species use retinal as chromophore, most freshwater fish use 3-dehydroretinal, or a mixture of retinal and 3-dehydroretinal. Light-induced isomerization of 11-cis to all-trans retinal triggers a conformational change that activates signaling via G-proteins. Subsequent receptor phosphorylation mediates displacement of the bound G-protein alpha subunit by arrestin and terminates signaling. The chain is Rhodopsin (rho) from Chelon labrosus (Thicklip grey mullet).